A 156-amino-acid polypeptide reads, in one-letter code: ATP synthase subunit b (156 aa).

Residues 3 to 23 traverse the membrane as a helical segment; the sequence is ITFTIFAQSLAFAALIWIVAT.

It belongs to the ATPase B chain family. As to quaternary structure, F-type ATPases have 2 components, F(1) - the catalytic core - and F(0) - the membrane proton channel. F(1) has five subunits: alpha(3), beta(3), gamma(1), delta(1), epsilon(1). F(0) has three main subunits: a(1), b(2) and c(10-14). The alpha and beta chains form an alternating ring which encloses part of the gamma chain. F(1) is attached to F(0) by a central stalk formed by the gamma and epsilon chains, while a peripheral stalk is formed by the delta and b chains.

Its subcellular location is the cell inner membrane. In terms of biological role, f(1)F(0) ATP synthase produces ATP from ADP in the presence of a proton or sodium gradient. F-type ATPases consist of two structural domains, F(1) containing the extramembraneous catalytic core and F(0) containing the membrane proton channel, linked together by a central stalk and a peripheral stalk. During catalysis, ATP synthesis in the catalytic domain of F(1) is coupled via a rotary mechanism of the central stalk subunits to proton translocation. Functionally, component of the F(0) channel, it forms part of the peripheral stalk, linking F(1) to F(0). In Xylella fastidiosa (strain 9a5c), this protein is ATP synthase subunit b.